A 356-amino-acid polypeptide reads, in one-letter code: Glutamine synthetase cytosolic isozyme 1-1 (356 aa).

In terms of domain architecture, GS beta-grasp spans 19–99 (IIAEYIWIGG…VMCDCYTPAG (81 aa)). One can recognise a GS catalytic domain in the interval 106–356 (KRHNAAKIFS…IAETTIIWKP (251 aa)).

This sequence belongs to the glutamine synthetase family. In terms of assembly, homooctamer. As to expression, highly expressed in leaf blades, at intermediate levels in spikelets (rice flower) and at lower levels in roots.

The protein localises to the cytoplasm. The enzyme catalyses L-glutamate + NH4(+) + ATP = L-glutamine + ADP + phosphate + H(+). High-affinity glutamine synthetase involved in ammonium assimilation. Seems to be a major component of the cytosolic glutamine synthetic pathway in leaf blades. Plays an important role in maintaining carbon and nitrogen metabolic balance during ammonium assimilation in shoots and roots, thus controlling plant growth and development. Plays an important role in maintaining broad range of metabolites and transcripts involved in the maintenance of plant metabolic homeostasis and development of plastid in roots. The polypeptide is Glutamine synthetase cytosolic isozyme 1-1 (Oryza sativa subsp. japonica (Rice)).